A 757-amino-acid chain; its full sequence is Inhibitor of nuclear factor kappa-B kinase subunit beta (757 aa).

One can recognise a Protein kinase domain in the interval 15-300; the sequence is WEMKERLGTG…DPQYGPNGCF (286 aa). ATP is bound by residues 21–29 and Lys-44; that span reads LGTGGFGNV. Asp-145 acts as the Proton acceptor in catalysis. Lys-163 participates in a covalent cross-link: Glycyl lysine isopeptide (Lys-Gly) (interchain with G-Cter in ubiquitin). Residue Ser-177 is modified to Phosphoserine; by TBK1 and PKC/PRKCZ. Cys-179 is subject to S-nitrosocysteine. Ser-181 carries the phosphoserine; by TBK1, PKC/PRKCZ and PDPK1 modification. At Pro-191 the chain carries Hydroxyproline. Residues 458–479 form a leucine-zipper region; sequence LLRNNSCLSKMKNAMASTAQQL. Ser-670 bears the Phosphoserine; by autocatalysis mark. At Ser-672 the chain carries Phosphoserine. Phosphoserine; by autocatalysis is present on residues Ser-675, Ser-682, Ser-689, Ser-692, Ser-697, Ser-705, Ser-733, and Ser-740. The segment at 682 to 703 is disordered; sequence SHPGHLMSQPSSACDSLPDSDK. The tract at residues 737–742 is NEMO-binding; the sequence is LDWSWL.

This sequence belongs to the protein kinase superfamily. Ser/Thr protein kinase family. I-kappa-B kinase subfamily. As to quaternary structure, component of the I-kappa-B-kinase (IKK) core complex consisting of CHUK, IKBKB and IKBKG; probably four alpha/CHUK-beta/IKBKB dimers are associated with four gamma/IKBKG subunits. The IKK core complex seems to associate with regulatory or adapter proteins to form a IKK-signalosome holo-complex. The IKK complex associates with TERF2IP/RAP1, leading to promote IKK-mediated phosphorylation of RELA/p65. Part of a complex composed of NCOA2, NCOA3, CHUK/IKKA, IKBKB, IKBKG and CREBBP. Part of a 70-90 kDa complex at least consisting of CHUK/IKKA, IKBKB, NFKBIA, RELA, ELP1 and MAP3K14. Found in a membrane raft complex, at least composed of BCL10, CARD11, DPP4 and IKBKB. Interacts with SQSTM1 through PRKCZ or PRKCI. Forms an NGF-induced complex with IKBKB, PRKCI and TRAF6. May interact with MAVS/IPS1. Interacts with NALP2. Interacts with TICAM1. Interacts with FAF1; the interaction disrupts the IKK complex formation. Interacts with ATM. Part of a ternary complex consisting of TANK, IKBKB and IKBKG. Interacts with NIBP; the interaction is direct. Interacts with ARRB1 and ARRB2. Interacts with TRIM21. Interacts with NLRC5; prevents IKBKB phosphorylation and kinase activity. Interacts with PDPK1. Interacts with EIF2AK2/PKR. The phosphorylated form interacts with PPM1A and PPM1B. Interacts with ZNF268 isoform 2; the interaction is further increased in a TNF-alpha-dependent manner. Interacts with IKBKE. Interacts with ZC3H12A. Interacts with AKAP13. Interacts with LRRC14; disrupts IKBKB-IKBKG interaction preventing I-kappa-B-kinase (IKK) core complex formation and leading to a decrease of IKBKB phosphorylation and NF-kappaB activation. Interacts with SASH1. Interacts with ARFIP2. Interacts with FKBP5. Upon cytokine stimulation, phosphorylated on Ser-177 and Ser-181 by MEKK1 and/or MAP3K14/NIK as well as TBK1 and PRKCZ; which enhances activity. Phosphorylated by MAP3K7/TAK1 in response to NOD1 and NOD2 signaling, promoting activation and phosphorylation of NF-kappa-B inhibitors, leading to NF-kappa-B activation. Once activated, autophosphorylates on the C-terminal serine cluster; which decreases activity and prevents prolonged activation of the inflammatory response. Phosphorylated by the IKK-related kinases TBK1 and IKBKE, which is associated with reduced CHUK/IKKA and IKBKB activity and NF-kappa-B-dependent gene transcription. Dephosphorylated at Ser-177 and Ser-181 by PPM1A and PPM1B. In terms of processing, ubiquitinated. Monoubiquitination involves TRIM21 that leads to inhibition of Tax-induced NF-kappa-B signaling. 'Ser-163' may not serve as a monoubiquitination site. Ubiquitination on 'Ser-163' may modulate phosphorylation on C-terminal serine residues. Post-translationally, hydroxylated by PHD1/EGLN2, loss of hydroxylation under hypoxic conditions results in activation of NF-kappa-B.

It localises to the cytoplasm. Its subcellular location is the nucleus. It is found in the membrane raft. It carries out the reaction L-seryl-[I-kappa-B protein] + ATP = O-phospho-L-seryl-[I-kappa-B protein] + ADP + H(+). The enzyme catalyses L-seryl-[protein] + ATP = O-phospho-L-seryl-[protein] + ADP + H(+). It catalyses the reaction L-threonyl-[protein] + ATP = O-phospho-L-threonyl-[protein] + ADP + H(+). Its function is as follows. Serine kinase that plays an essential role in the NF-kappa-B signaling pathway which is activated by multiple stimuli such as inflammatory cytokines, bacterial or viral products, DNA damages or other cellular stresses. Acts as a part of the canonical IKK complex in the conventional pathway of NF-kappa-B activation. Phosphorylates inhibitors of NF-kappa-B on 2 critical serine residues. These modifications allow polyubiquitination of the inhibitors and subsequent degradation by the proteasome. In turn, free NF-kappa-B is translocated into the nucleus and activates the transcription of hundreds of genes involved in immune response, growth control, or protection against apoptosis. In addition to the NF-kappa-B inhibitors, phosphorylates several other components of the signaling pathway including NEMO/IKBKG, NF-kappa-B subunits RELA and NFKB1, as well as IKK-related kinases TBK1 and IKBKE. IKK-related kinase phosphorylations may prevent the overproduction of inflammatory mediators since they exert a negative regulation on canonical IKKs. Phosphorylates FOXO3, mediating the TNF-dependent inactivation of this pro-apoptotic transcription factor. Also phosphorylates other substrates including NAA10, NCOA3, BCL10 and IRS1. Phosphorylates RIPK1 at 'Ser-25' which represses its kinase activity and consequently prevents TNF-mediated RIPK1-dependent cell death. Phosphorylates the C-terminus of IRF5, stimulating IRF5 homodimerization and translocation into the nucleus. The polypeptide is Inhibitor of nuclear factor kappa-B kinase subunit beta (Ikbkb) (Rattus norvegicus (Rat)).